Reading from the N-terminus, the 337-residue chain is Tetraacyldisaccharide 4'-kinase (337 aa).

Position 72–79 (72–79 (TVGGSGKT)) interacts with ATP.

Belongs to the LpxK family.

The enzyme catalyses a lipid A disaccharide + ATP = a lipid IVA + ADP + H(+). Its pathway is glycolipid biosynthesis; lipid IV(A) biosynthesis; lipid IV(A) from (3R)-3-hydroxytetradecanoyl-[acyl-carrier-protein] and UDP-N-acetyl-alpha-D-glucosamine: step 6/6. In terms of biological role, transfers the gamma-phosphate of ATP to the 4'-position of a tetraacyldisaccharide 1-phosphate intermediate (termed DS-1-P) to form tetraacyldisaccharide 1,4'-bis-phosphate (lipid IVA). This chain is Tetraacyldisaccharide 4'-kinase, found in Shewanella sediminis (strain HAW-EB3).